Reading from the N-terminus, the 831-residue chain is Phosphoinositide phosphatase SAC4 (831 aa).

An SAC domain is found at 162–551 (LCMVDLTKDF…GDTLAYQYGG (390 aa)). The tract at residues 439 to 475 (SDADTSPHNSSDDDSRDYDSLEKNCRPSKNVANGDYD) is disordered. A compositionally biased stretch (basic and acidic residues) spans 448 to 463 (SSDDDSRDYDSLEKNC). A Phosphatase catalytic core motif is present at residues 487–498 (RTNCIDCLDRTN). The disordered stretch occupies residues 785–805 (PAMRESGSSSRKGKEPVETEL). Positions 796-805 (KGKEPVETEL) are enriched in basic and acidic residues.

Component of the PI(3,5)P2 regulatory complex at least composed of ATG18, SAC/FIG4, FAB1 and VAC14. Mg(2+) is required as a cofactor. In terms of tissue distribution, ubiquitous with a higher level of expression in young seedlings than in other tissues.

It localises to the vacuole membrane. It carries out the reaction a 1,2-diacyl-sn-glycero-3-phospho-(1D-myo-inositol-3,5-bisphosphate) + H2O = a 1,2-diacyl-sn-glycero-3-phospho-(1D-myo-inositol-3-phosphate) + phosphate. In terms of biological role, the PI(3,5)P2 regulatory complex regulates both the synthesis and turnover of phosphatidylinositol 3,5-bisphosphate (PtdIns(3,5)P2). This chain is Phosphoinositide phosphatase SAC4 (SAC4), found in Arabidopsis thaliana (Mouse-ear cress).